We begin with the raw amino-acid sequence, 312 residues long: Ribosomal RNA small subunit methyltransferase H (312 aa).

S-adenosyl-L-methionine-binding positions include 34-36 (AGH), Asp54, Phe81, Asp102, and Gln109.

This sequence belongs to the methyltransferase superfamily. RsmH family.

The protein resides in the cytoplasm. It carries out the reaction cytidine(1402) in 16S rRNA + S-adenosyl-L-methionine = N(4)-methylcytidine(1402) in 16S rRNA + S-adenosyl-L-homocysteine + H(+). In terms of biological role, specifically methylates the N4 position of cytidine in position 1402 (C1402) of 16S rRNA. This is Ribosomal RNA small subunit methyltransferase H from Citrifermentans bemidjiense (strain ATCC BAA-1014 / DSM 16622 / JCM 12645 / Bem) (Geobacter bemidjiensis).